A 690-amino-acid polypeptide reads, in one-letter code: MPRQHAIEDYRNFGIMAHIDAGKTTTTERILYYTGKSHKIGEVHEGAATMDWMEQEQERGITITSAATTAFWAGKRLNIIDTPGHVDFTIEVERSLRVLDGAVCVLDSNQGVEPQTETVWRQGDKYKVPRIVFANKMDKTGADFFKCLADIVDRLGAKPIAIQLPIGAENNFKGLVDLVKMKGIVWNDESLGAKFDYVDIPEDLVEQAKEYREKMVEAAVELDDDALAAFLDGNEPDEATLKRLIRKAVLTGAFYPVLCGSAFKNKGVQPLLDAVVDYLPSPIDVPAIKGTDDRGNEVVRKADDKEPLALLAFKIMDDPFVGTITFCRIYSGVLQSGTGVVNSTREKKERIGRMLLMHANNREDIKEAYAGDIVALAGLKEARTGDTLCDPDKQVILEKMEFPEPVIEIAIEPKSKADQEKLGVALAKLAAEDPSFRVSTDQESGQTILKGMGELHLDIKVDILKRTYKVDANIGAPQVAFRERVTKKAEVKYTHKKQTGGTGQFAEVSIVVEPNEPGKGYEFESKIVGGAVPKEYIPGVEKGLNSVMSSGVVAGFPVVDVKVQLVDGKYHDVDSSALAFEIASRAAFREALQKGKSVLLEPIMKVEVVTPEDYTGSVIGDLNSRRGQIQGQDMRGNANVINAMVPLMNMFGYVNNLRSMSQGRATFTMQFDHYAEAPANVSAEVQKKFA.

In terms of domain architecture, tr-type G spans 8-283 (EDYRNFGIMA…AVVDYLPSPI (276 aa)). Residues 17 to 24 (AHIDAGKT), 81 to 85 (DTPGH), and 135 to 138 (NKMD) each bind GTP.

This sequence belongs to the TRAFAC class translation factor GTPase superfamily. Classic translation factor GTPase family. EF-G/EF-2 subfamily.

It localises to the cytoplasm. Catalyzes the GTP-dependent ribosomal translocation step during translation elongation. During this step, the ribosome changes from the pre-translocational (PRE) to the post-translocational (POST) state as the newly formed A-site-bound peptidyl-tRNA and P-site-bound deacylated tRNA move to the P and E sites, respectively. Catalyzes the coordinated movement of the two tRNA molecules, the mRNA and conformational changes in the ribosome. This is Elongation factor G from Bradyrhizobium diazoefficiens (strain JCM 10833 / BCRC 13528 / IAM 13628 / NBRC 14792 / USDA 110).